We begin with the raw amino-acid sequence, 245 residues long: Triosephosphate isomerase (245 aa).

9-11 (NWK) provides a ligand contact to substrate. His92 acts as the Electrophile in catalysis. The Proton acceptor role is filled by Glu164. Substrate-binding positions include Gly170, Ser209, and 230 to 231 (GG).

Belongs to the triosephosphate isomerase family. In terms of assembly, homodimer.

It is found in the cytoplasm. It catalyses the reaction D-glyceraldehyde 3-phosphate = dihydroxyacetone phosphate. Its pathway is carbohydrate biosynthesis; gluconeogenesis. The protein operates within carbohydrate degradation; glycolysis; D-glyceraldehyde 3-phosphate from glycerone phosphate: step 1/1. Functionally, involved in the gluconeogenesis. Catalyzes stereospecifically the conversion of dihydroxyacetone phosphate (DHAP) to D-glyceraldehyde-3-phosphate (G3P). The sequence is that of Triosephosphate isomerase from Cupriavidus pinatubonensis (strain JMP 134 / LMG 1197) (Cupriavidus necator (strain JMP 134)).